Reading from the N-terminus, the 341-residue chain is Keratin-associated protein 29-1 (341 aa).

7 tandem repeats follow at residues 5–9, 115–119, 120–124, 150–154, 240–244, 276–280, and 307–311. Residues 5–311 form a 7 X 5 AA repeats of C-C-X(3) region; the sequence is CCPGNTTAIP…GCKSACCVTG (307 aa).

Belongs to the KRTAP type 10 family.

In Homo sapiens (Human), this protein is Keratin-associated protein 29-1 (KRTAP29-1).